The chain runs to 162 residues: Succinate dehydrogenase assembly factor 2-A, mitochondrial (162 aa).

Belongs to the SDHAF2 family. Interacts with the flavoprotein subunit within the SDH catalytic dimer.

The protein resides in the mitochondrion matrix. Plays an essential role in the assembly of succinate dehydrogenase (SDH), an enzyme complex (also referred to as respiratory complex II) that is a component of both the tricarboxylic acid (TCA) cycle and the mitochondrial electron transport chain, and which couples the oxidation of succinate to fumarate with the reduction of ubiquinone (coenzyme Q) to ubiquinol. Required for flavinylation (covalent attachment of FAD) of the flavoprotein subunit of the SDH catalytic dimer. In Drosophila yakuba (Fruit fly), this protein is Succinate dehydrogenase assembly factor 2-A, mitochondrial.